The sequence spans 265 residues: Indole-3-glycerol phosphate synthase (265 aa).

The protein belongs to the TrpC family.

The catalysed reaction is 1-(2-carboxyphenylamino)-1-deoxy-D-ribulose 5-phosphate + H(+) = (1S,2R)-1-C-(indol-3-yl)glycerol 3-phosphate + CO2 + H2O. Its pathway is amino-acid biosynthesis; L-tryptophan biosynthesis; L-tryptophan from chorismate: step 4/5. The protein is Indole-3-glycerol phosphate synthase of Hyphomonas neptunium (strain ATCC 15444).